The chain runs to 531 residues: MSISLGNAFIKNFLGKAPDWYKIAIISFLIINPLVFFFVDPFAAGWLLVVEFIFTLAMALKCYPLQPGGLLAIQAIAIGMTSAEQVKHELVANIEVLLLLVFMVAGIYFMKQLLLFIFTKILIGIKSKTALSVAFCFTAAFLSAFLDALTVIAVVISVAVGFYAIYHRVASGQGGTPSHDHTCDSNVTDELSRDDLENYRAFLRSLLMHAGVGTALGGVMTMVGEPQNLIIADQANWMFGEFIIRMLPVTAPVFICGLLTCVVVEKLGICGYGAKLPENVRNILEEYESEERKNRTNIDNAKLIIQSVIAVWLIVALAMHLAAVGLIGLSVIILATAFTGVIEEHAMGKAFEEALPFTALLAVFFAIVAVIIDQELFKPIIDAVLAVEDKSSQLALFYVANGILSMVSDNVFVGTVYINEVKTALLDGVITRDQFDLLAVAINTGTNLPSVATPNGQAAFLFLLTSALAPLIQLSYGRMVWMALPYTIVLALVGLFGISFLLEPMTTMFYDFGWITHGTIEAATNAVSSGH.

Helical transmembrane passes span Phe-13–Pro-33, Leu-34–Phe-54, Leu-90–Met-110, Ile-121–Phe-141, Phe-145–Ile-165, Leu-206–Pro-226, Phe-242–Val-262, Val-308–Gly-328, Glu-352–Ile-372, Leu-394–Gly-414, Gly-456–Tyr-476, and Met-482–Leu-502.

Belongs to the NhaB Na(+)/H(+) (TC 2.A.34) antiporter family.

It is found in the cell inner membrane. It catalyses the reaction 2 Na(+)(in) + 3 H(+)(out) = 2 Na(+)(out) + 3 H(+)(in). Its function is as follows. Na(+)/H(+) antiporter that extrudes sodium in exchange for external protons. The chain is Na(+)/H(+) antiporter NhaB from Aliivibrio salmonicida (strain LFI1238) (Vibrio salmonicida (strain LFI1238)).